A 459-amino-acid polypeptide reads, in one-letter code: MLGAVKMEGHEPSDWSSYYAEPEGYSSVSNMNAGLGMNGMNTYMSMSAAAMGGGSGNMSAGSMNMSSYVGAGMSPSLAGMSPGAGAMAGMSGSAGAAGVAGMGPHLSPSLSPLGGQAAGAMGGLAPYANMNSMSPMYGQAGLSRARDPKTYRRSYTHAKPPYSYISLITMAIQQSPNKMLTLSEIYQWIMDLFPFYRQNQQRWQNSIRHSLSFNDCFLKVPRSPDKPGKGSFWTLHPDSGNMFENGCYLRRQKRFKCEKQLALKEAAGAASSGGKKTAPGSQASQAQLGEAAGSASETPAGTESPHSSASPCQEHKRGGLSELKGAPASALSPPEPAPSPGQQQQAAAHLLGPPHHPGLPPEAHLKPEHHYAFNHPFSINNLMSSEQQHHHSHHHHQPHKMDLKAYEQVMHYPGGYGSPMPGSLAMGPVTNKAGLDASPLAADTSYYQGVYSRPIMNSS.

A transactivation domain 1 region spans residues 14-93 (DWSSYYAEPE…AGAMAGMSGS (80 aa)). Positions 106 to 113 (LSPSLSPL) match the Nuclear localization signal motif. Position 156 is a phosphothreonine (T156). The segment at residues 159 to 252 (KPPYSYISLI…FENGCYLRRQ (94 aa)) is a DNA-binding region (fork-head). Phosphoserine is present on S212. Positions 268–281 (GAASSGGKKTAPGS) are enriched in low complexity. A disordered region spans residues 268–366 (GAASSGGKKT…PGLPPEAHLK (99 aa)). At S284 the chain carries Phosphoserine. Over residues 295–311 (ASETPAGTESPHSSASP) the composition is skewed to polar residues. Position 302 is a phosphothreonine (T302). 4 positions are modified to phosphoserine: S304, S307, S308, and S310. Residues 340-353 (PGQQQQAAAHLLGP) show a composition bias toward low complexity. The transactivation domain 2 stretch occupies residues 362-459 (EAHLKPEHHY…VYSRPIMNSS (98 aa)). Residues S438 and S459 each carry the phosphoserine modification.

In terms of assembly, binds DNA as a monomer. Binds TLE1. Interacts with FOXA1 and FOXA3. Interacts with PRKDC. Interacts with AKT1. Interacts with TET1; this interaction may recruit TET1 to specific genomic loci to mediate their demethylation. Post-translationally, phosphorylation on Thr-156 abolishes binding to target promoters and subsequent transcription activation upon insulin stimulation. Restricted mainly to endoderm-derived tissues (lung, liver, stomach, and small intestine). Expressed in epididymis with region-specific expression pattern: no expression is observed in initial segment, low expression in proximal caput, gradiently higher levels of expression in middle and distal caput and highest level in corpus and cauda (at protein level).

It localises to the nucleus. It is found in the cytoplasm. In terms of biological role, transcription factor that is involved in embryonic development, establishment of tissue-specific gene expression and regulation of gene expression in differentiated tissues. Is thought to act as a 'pioneer' factor opening the compacted chromatin for other proteins through interactions with nucleosomal core histones and thereby replacing linker histones at target enhancer and/or promoter sites. Binds DNA with the consensus sequence 5'-[AC]A[AT]T[AG]TT[GT][AG][CT]T[CT]-3'. In embryonic development is required for notochord formation. Involved in the development of multiple endoderm-derived organ systems such as the liver, pancreas and lungs; Foxa1 and Foxa2 seem to have at least in part redundant roles. FOXA1 and FOXA2 are essential for hepatic specification. FOXA1 and FOXA2 are required for morphogenesis and cell differentiation during formation of the lung. FOXA1 and FOXA2 are involved in bile duct formation; they positively regulate the binding glucocorticoid receptor/NR3C1 to the IL6 promoter. FOXA1 and FOXA2 regulate multiple phases of midbrain dopaminergic neuron development; they regulate expression of NEUROG2 at the beginning of mDA neurogenesis and of NR4A2 and EN1 in immature mDA neurons. Modulates the transcriptional activity of nuclear hormone receptors; inhibits AR-mediated transcription from the LCN5 promoter. Binds to fibrinogen beta promoter and is involved in IL6-induced fibrinogen beta transcriptional activation. Originally described as a transcription activator for a number of liver genes such as AFP, albumin, tyrosine aminotransferase, PEPCK, etc. Interacts with the cis-acting regulatory regions of these genes. Involved in glucose homeostasis; regulates the expression of genes important for glucose sensing in pancreatic beta-cells and glucose homeostasis. In pancreatic beta cells activates transcription of potassium channel subunits KCNJ11 and ABCC8. Involved in regulation of fat metabolism; activates transcriptional programs of lipid metabolism and ketogenesis at low insulin state. Involved in transcriptional regulation of MUC2 in the intestine. The sequence is that of Hepatocyte nuclear factor 3-beta (Foxa2) from Mus musculus (Mouse).